The chain runs to 571 residues: Proline--tRNA ligase (571 aa).

The protein belongs to the class-II aminoacyl-tRNA synthetase family. ProS type 1 subfamily. Homodimer.

The protein resides in the cytoplasm. The catalysed reaction is tRNA(Pro) + L-proline + ATP = L-prolyl-tRNA(Pro) + AMP + diphosphate. Its function is as follows. Catalyzes the attachment of proline to tRNA(Pro) in a two-step reaction: proline is first activated by ATP to form Pro-AMP and then transferred to the acceptor end of tRNA(Pro). As ProRS can inadvertently accommodate and process non-cognate amino acids such as alanine and cysteine, to avoid such errors it has two additional distinct editing activities against alanine. One activity is designated as 'pretransfer' editing and involves the tRNA(Pro)-independent hydrolysis of activated Ala-AMP. The other activity is designated 'posttransfer' editing and involves deacylation of mischarged Ala-tRNA(Pro). The misacylated Cys-tRNA(Pro) is not edited by ProRS. This is Proline--tRNA ligase from Psychromonas ingrahamii (strain DSM 17664 / CCUG 51855 / 37).